The sequence spans 304 residues: Acetyl-coenzyme A carboxylase carboxyl transferase subunit beta (304 aa).

Residues 16–42 form a disordered region; it reads SSLPPKNSEGGLAYFDEPSPEQESTRK. The CoA carboxyltransferase N-terminal domain maps to 48–304; that stretch reads LWVKCPKCGE…LLRYHQEGAV (257 aa). Positions 52, 55, 71, and 74 each coordinate Zn(2+). A C4-type zinc finger spans residues 52-74; it reads CPKCGEALFNKDLVENQRVCLTC.

This sequence belongs to the AccD/PCCB family. As to quaternary structure, acetyl-CoA carboxylase is a heterohexamer composed of biotin carboxyl carrier protein (AccB), biotin carboxylase (AccC) and two subunits each of ACCase subunit alpha (AccA) and ACCase subunit beta (AccD). Requires Zn(2+) as cofactor.

The protein resides in the cytoplasm. The catalysed reaction is N(6)-carboxybiotinyl-L-lysyl-[protein] + acetyl-CoA = N(6)-biotinyl-L-lysyl-[protein] + malonyl-CoA. It participates in lipid metabolism; malonyl-CoA biosynthesis; malonyl-CoA from acetyl-CoA: step 1/1. Functionally, component of the acetyl coenzyme A carboxylase (ACC) complex. Biotin carboxylase (BC) catalyzes the carboxylation of biotin on its carrier protein (BCCP) and then the CO(2) group is transferred by the transcarboxylase to acetyl-CoA to form malonyl-CoA. The sequence is that of Acetyl-coenzyme A carboxylase carboxyl transferase subunit beta from Desulfitobacterium hafniense (strain Y51).